Consider the following 501-residue polypeptide: Atypical kinase COQ8, mitochondrial (501 aa).

A mitochondrion-targeting transit peptide spans 1–29 (MVTNMVKLRNLRRLYCSSRLLRTIQNGRI). A disordered region spans residues 41–69 (YTTKSAKEGEENVERKHEEEKKDTLKSSS). A compositionally biased stretch (basic and acidic residues) spans 45-65 (SAKEGEENVERKHEEEKKDTL). A KxGQ motif motif is present at residues 134–137 (KIGQ). One can recognise a Protein kinase domain in the interval 188-501 (KFDKIPMAAA…LFKEIFAYKV (314 aa)). The short motif at 195–198 (AAAS) is the AAAS motif element. Residues Ser198, Lys216, and 303-306 (MTRM) contribute to the ATP site. Catalysis depends on Asp346, which acts as the Proton acceptor. Residues Asn351 and Asp365 each coordinate ATP.

The protein belongs to the protein kinase superfamily. ADCK protein kinase family. In terms of assembly, forms homopolymers. Predominantly associated with a complex of about 500 kDa.

Its subcellular location is the mitochondrion inner membrane. Its pathway is cofactor biosynthesis; ubiquinone biosynthesis. Its function is as follows. Atypical kinase involved in the biosynthesis of coenzyme Q, also named ubiquinone, an essential lipid-soluble electron transporter for aerobic cellular respiration. Its substrate specificity is still unclear: may act as a protein kinase that mediates phosphorylation of COQ3, COQ5 and/or COQ7. According to other reports, acts as a small molecule kinase, possibly a lipid kinase that phosphorylates a prenyl lipid in the ubiquinone biosynthesis pathway, as suggested by its ability to bind coenzyme Q lipid intermediates. This chain is Atypical kinase COQ8, mitochondrial (COQ8), found in Saccharomyces cerevisiae (strain ATCC 204508 / S288c) (Baker's yeast).